A 79-amino-acid chain; its full sequence is Hematopoietic cell signal transducer (79 aa).

The first 17 residues, 1–17 (MDPPGYLLFLLLLPVAA), serve as a signal peptide directing secretion. Over 18-35 (SQTSAGSCSGCGTLSLPL) the chain is Extracellular. The helical transmembrane segment at 36-56 (LAGLVAADAVMSLLIVGVVFV) threads the bilayer. Residues 57–79 (CMRPHGRPAQEDGRVYINMPGRG) are Cytoplasmic-facing. Y72 bears the Phosphotyrosine mark. The interval 72–74 (YIN) is GRB2 binding site. A PIK3R1 binding site region spans residues 72–75 (YINM).

It belongs to the DAP10 family. In terms of assembly, homodimer; Disulfide-linked. Interacts with KLRK1 to form a stable complex, which results in surface expression of both proteins, whereas alone, it is minimally expressed. Interacts with PIK3R1 and GRB2. Interacts with CLEC5A. Forms an CLEC5A/TYROBP/HCST trimolecular complex depending almost solely on TYROBP. Heterohexamer composed of four subunits of HCST/DAP10 and two subunits of KLRK1. Interacts (via transmembrane domain) with KLRK1 isoform 1 (via transmembrane domain); the interaction is required for KLRK1 cell surface expression on naive NK cells and activated CD8(+) T-cells, but is dispensable on activated TYROBP-expressing NK cells. Interacts (via transmembrane domain) with KLRK1 isoform 2 (via transmembrane domain); the interaction is required for KLRK1 NK cell surface expression and induces NK cell-mediated cytotoxicity. Interacts with CD300H. Phosphorylated; PIK3R1 and GRB2 associate specifically with tyrosine-phosphorylated HCST. In terms of processing, O-glycosylated.

The protein resides in the membrane. In terms of biological role, transmembrane adapter protein which associates with KLRK1 to form an activation receptor KLRK1-HCST in lymphoid and myeloid cells; this receptor plays a major role in triggering cytotoxicity against target cells expressing cell surface ligands such as MHC class I chain-related MICA and MICB, and UL16-binding proteins (ULBPs); these ligands are up-regulated by stress conditions and pathological state such as viral infection and tumor transformation. Functions as a docking site for PI3-kinase PIK3R1 and GRB2. Interaction of ULBPs with KLRK1-HCST triggers calcium mobilization and activation of the PIK3R1, MAP2K/ERK, and JAK2/STAT5 signaling pathways. Both PIK3R1 and GRB2 are required for full KLRK1-HCST-mediated activation and ultimate killing of target cells. In NK cells, KLRK1-HCST signaling directly induces cytotoxicity and enhances cytokine production initiated via DAP12/TYROBP-associated receptors. In T-cells, it provides primarily costimulation for TCR-induced signals. KLRK1-HCST receptor plays a role in immune surveillance against tumors and is required for cytolysis of tumors cells; indeed, melanoma cells that do not express KLRK1 ligands escape from immune surveillance mediated by NK cells. The chain is Hematopoietic cell signal transducer (Hcst) from Mus musculus (Mouse).